The sequence spans 342 residues: Transmembrane protein 115 homolog (342 aa).

Over 1–21 (MQYSSRFLELNIPDSFLNINK) the chain is Cytoplasmic. A helical transmembrane segment spans residues 22–42 (IPDATKFITVTYICLTATLFC). Residues 43–121 (IRRSLYNKLV…NWNSSKEMFK (79 aa)) lie on the Lumenal side of the membrane. N114 is a glycosylation site (N-linked (GlcNAc...) asparagine). The helical transmembrane segment at 122–142 (FIIVLGSLTNVLIIMLTLLVS) threads the bilayer. The Cytoplasmic segment spans residues 143–159 (FFSNKVRLDIPLDGNYT). The chain crosses the membrane as a helical span at residues 160-180 (ILIGFPIIYRQLLPETTIIHL). Residues 181–207 (KTPQFLAKNFRFKLLPIFVMFTMTVTQ) are Lumenal-facing. A helical transmembrane segment spans residues 208 to 228 (IIWFHHFAQLFSIWVTFFASW). At 229–342 (SYLRFFQKLA…QVLEERMVNP (114 aa)) the chain is on the cytoplasmic side.

This sequence belongs to the TMEM115 family. In terms of assembly, homooligomer.

It localises to the golgi apparatus membrane. May play a role in retrograde transport of proteins from the Golgi to the endoplasmic reticulum. In Saccharomyces cerevisiae (strain ATCC 204508 / S288c) (Baker's yeast), this protein is Transmembrane protein 115 homolog.